The following is a 608-amino-acid chain: Nuclear receptor subfamily 2 group C member 1 (608 aa).

The interval methionine 1–methionine 179 is required for interaction with KAT2B. The nuclear receptor DNA-binding region spans phenylalanine 111–cysteine 186. 2 consecutive NR C4-type zinc fingers follow at residues cysteine 114–cysteine 134 and cysteine 150–cysteine 169. Serine 198 and serine 216 each carry phosphoserine. Threonine 221 bears the Phosphothreonine mark. Phosphothreonine; by MAPK1 is present on threonine 223. Lysine 251 is covalently cross-linked (Glycyl lysine isopeptide (Lys-Gly) (interchain with G-Cter in SUMO); alternate). Lysine 251 participates in a covalent cross-link: Glycyl lysine isopeptide (Lys-Gly) (interchain with G-Cter in SUMO2); alternate. Residues glycine 353 to glutamate 595 enclose the NR LBD domain. At serine 586 the chain carries Phosphoserine; by PKC. The interval proline 589–isoleucine 608 is required for interaction with NRIP1. Residue lysine 593 forms a Glycyl lysine isopeptide (Lys-Gly) (interchain with G-Cter in SUMO2) linkage.

Belongs to the nuclear hormone receptor family. NR2 subfamily. As to quaternary structure, homodimer. Heterodimer; with NR2C2 which is required for chromatin remodeling and for binding to promoter regions such as globin DR1 repeats. Interacts with ESR1; the interaction prevents homodimerization of ESR1 and suppresses its transcriptional activity and cell growth. Interacts with NRIP1 (via its LXXLL motifs); the interaction provides corepressor activity. Interacts with HDAC3 (via the DNA-binding domain); the interaction recruits phosphorylated NR2C1 to PML bodies for sumoylation. Interacts with HDAC4 (via the DNA-binding domain). Interacts with PIAS1; the interaction is required for sumoylation of NR2C1. Interacts with UBE2I; the interaction is required for sumoylation of NR2C1. Interacts with KAT2B; the interaction acts as a corepressor of gene expression. Post-translationally, sumoylation requires both PIAS1 and UBE2I. Sumoylation appears to dissociate NR2C1 from the PML nuclear bodies. Enhances the interaction with NRIP1 but inhibits interaction with KAT2B. In proliferating cells, stimulation by all-trans retinoic acid, activation of MAPK1-mediated phosphorylation and recruitment to PML bodies with subsequent sumoylation, suppresses OCT4 expression. In terms of processing, phosphorylated on several serine and threonine residues. Phosphorylation on Thr-223, stimulated by all-trans retinoic acid (atRA) mediates PML location and sumoylation in proliferating cells which then modulates its association with effector molecules, KAT2B and NRIP1. Phosphorylation on Ser-586 by PKC is important for protein stability and function as activator of RARB.

Its subcellular location is the nucleus. It is found in the PML body. Functionally, orphan nuclear receptor. Binds the IR7 element in the promoter of its own gene in an autoregulatory negative feedback mechanism. Primarily repressor of a broad range of genes including ESR1 and RARB. Together with NR2C2, forms the core of the DRED (direct repeat erythroid-definitive) complex that represses embryonic and fetal globin transcription. Binds to hormone response elements (HREs) consisting of two 5'-AGGTCA-3' half site direct repeat consensus sequences. Also activator of OCT4 gene expression. Plays a fundamental role in early embryogenesis and regulates embryonic stem cell proliferation and differentiation. Mediator of retinoic acid-regulated preadipocyte proliferation. This chain is Nuclear receptor subfamily 2 group C member 1 (NR2C1), found in Bos taurus (Bovine).